Here is a 642-residue protein sequence, read N- to C-terminus: Threonine--tRNA ligase (642 aa).

One can recognise a TGS domain in the interval 1 to 61; it reads MPIITLPDGS…EEDASLEIIT (61 aa). Residues 244–535 form a catalytic region; the sequence is DHRKIGKQLD…LIEEYAGFFP (292 aa). Residues Cys-335, His-386, and His-512 each coordinate Zn(2+).

The protein belongs to the class-II aminoacyl-tRNA synthetase family. As to quaternary structure, homodimer. Zn(2+) is required as a cofactor.

The protein localises to the cytoplasm. It carries out the reaction tRNA(Thr) + L-threonine + ATP = L-threonyl-tRNA(Thr) + AMP + diphosphate + H(+). In terms of biological role, catalyzes the attachment of threonine to tRNA(Thr) in a two-step reaction: L-threonine is first activated by ATP to form Thr-AMP and then transferred to the acceptor end of tRNA(Thr). Also edits incorrectly charged L-seryl-tRNA(Thr). The protein is Threonine--tRNA ligase of Vibrio vulnificus (strain YJ016).